The chain runs to 226 residues: Ribonuclease 3 (226 aa).

The region spanning 5 to 127 is the RNase III domain; the sequence is LERLQRALGY…IIGAIYLDAG (123 aa). E40 lines the Mg(2+) pocket. D44 is an active-site residue. D113 and E116 together coordinate Mg(2+). E116 is a catalytic residue. The region spanning 154-224 is the DRBM domain; it reads DSKTRLQEYL…AKQALLALGV (71 aa).

The protein belongs to the ribonuclease III family. As to quaternary structure, homodimer. The cofactor is Mg(2+).

It localises to the cytoplasm. The catalysed reaction is Endonucleolytic cleavage to 5'-phosphomonoester.. Functionally, digests double-stranded RNA. Involved in the processing of primary rRNA transcript to yield the immediate precursors to the large and small rRNAs (23S and 16S). Processes some mRNAs, and tRNAs when they are encoded in the rRNA operon. Processes pre-crRNA and tracrRNA of type II CRISPR loci if present in the organism. The protein is Ribonuclease 3 of Hahella chejuensis (strain KCTC 2396).